Reading from the N-terminus, the 333-residue chain is Phosphate acyltransferase (333 aa).

It belongs to the PlsX family. In terms of assembly, homodimer. Probably interacts with PlsY.

It is found in the cytoplasm. It carries out the reaction a fatty acyl-[ACP] + phosphate = an acyl phosphate + holo-[ACP]. It participates in lipid metabolism; phospholipid metabolism. Catalyzes the reversible formation of acyl-phosphate (acyl-PO(4)) from acyl-[acyl-carrier-protein] (acyl-ACP). This enzyme utilizes acyl-ACP as fatty acyl donor, but not acyl-CoA. The chain is Phosphate acyltransferase from Desulforamulus reducens (strain ATCC BAA-1160 / DSM 100696 / MI-1) (Desulfotomaculum reducens).